The primary structure comprises 434 residues: G2/mitotic-specific cyclin-2 (434 aa).

This sequence belongs to the cyclin family. Cyclin AB subfamily. Interacts with the CDC2 protein kinase to form a serine/threonine kinase holoenzyme complex also known as maturation promoting factor (MPF). The cyclin subunit imparts substrate specificity to the complex.

Functionally, essential for the control of the cell cycle at the G2/M (mitosis) transition. This Medicago sativa subsp. varia (Alfalfa) protein is G2/mitotic-specific cyclin-2.